A 308-amino-acid chain; its full sequence is Vacuolar lysine transporter YPQ1 (308 aa).

Over 1 to 12 (MQLVPLELNRST) the chain is Vacuolar. Asn9 carries an N-linked (GlcNAc...) asparagine glycan. One can recognise a PQ-loop 1 domain in the interval 10 to 76 (RSTLSGISGS…QHLLSTMIIL (67 aa)). A helical transmembrane segment spans residues 13 to 33 (LSGISGSISISCWIIVFVPQI). Residues 34 to 44 (YENFYRKSSDG) lie on the Cytoplasmic side of the membrane. The chain crosses the membrane as a helical span at residues 45–65 (LSLLFVVLWLAGDVFNLMGAV). Topologically, residues 66–68 (MQH) are vacuolar. The helical transmembrane segment at 69–89 (LLSTMIILAAYYTVADIILLG) threads the bilayer. The Cytoplasmic portion of the chain corresponds to 90–167 (QCLWYDNEEK…EVNSRNLIKD (78 aa)). Residues 168–188 (IFIVSGVVFVGFISWYVTYCV) form a helical membrane-spanning segment. An N-linked (GlcNAc...) asparagine glycan is attached at Asn189. Over 189-205 (NYTQPPPVEDPSLPVPE) the chain is Vacuolar. A helical transmembrane segment spans residues 206–226 (LQINWMAQIFGYLSALLYLGS). The 64-residue stretch at 211–274 (MAQIFGYLSA…ISLDWKYLIM (64 aa)) folds into the PQ-loop 2 domain. Residues 227-244 (RIPQILLNFKRKSCEGIS) lie on the Cytoplasmic side of the membrane. Residues 245–265 (FLFFLFACLGNTTFIFSVIVI) traverse the membrane as a helical segment. Over 266–277 (SLDWKYLIMNAS) the chain is Vacuolar. Residue Asn275 is glycosylated (N-linked (GlcNAc...) asparagine). A helical transmembrane segment spans residues 278-298 (WLVGSIGTLFMDFVIFSQFFI). The Cytoplasmic portion of the chain corresponds to 299-308 (YKRNKKFILN).

Belongs to the laat-1 family.

The protein localises to the vacuole membrane. Its function is as follows. Amino acid transporter that moves lysine into the vacuole. May also contribute to low affinity arginine import into the vacuole. Has also been suggested to mediate export of cationic amino acids from the vacuole. May function as an amino acid/proton antiporter. The chain is Vacuolar lysine transporter YPQ1 (YPQ1) from Saccharomyces cerevisiae (strain ATCC 204508 / S288c) (Baker's yeast).